A 258-amino-acid chain; its full sequence is Venom plasminogen activator LV-PA (258 aa).

Positions 1 to 18 (MVLITVLANLLILQLSYA) are cleaved as a signal peptide. Positions 19 to 24 (QKSSKL) are excised as a propeptide. The Peptidase S1 domain occupies 25–249 (VFGGDECNIN…YTDWIQSIIA (225 aa)). A glycan (N-linked (GlcNAc...) asparagine) is linked at Asn-44. Cys-50 and Cys-66 are joined by a disulfide. Catalysis depends on charge relay system residues His-65 and Asp-110. Intrachain disulfides connect Cys-142–Cys-210, Cys-174–Cys-189, and Cys-200–Cys-225. Residue Ser-204 is the Charge relay system of the active site.

This sequence belongs to the peptidase S1 family. Snake venom subfamily. As to quaternary structure, monomer. Post-translationally, N-glycosylated. PubMed:17034951 shows that it contains approximately 10% carbohydrates, PubMed:10871053 shows that it contains approximately 20% carbohydrates. As to expression, expressed by the venom gland.

It localises to the secreted. With respect to regulation, inhibited by the serine protease inhibitors NPGB, PMSF, p-aminobenzamidine and aprotinin. Not inhibited by soybean trypsin inhibitor or EDTA. Its function is as follows. Snake venom serine protease that activates plasminogen. Weakly hydrolyzes the alpha chain of human fibrinogen without releasing fibrinopeptide A. Does not hydrolyze plasma kallikrein or factor Xa. Does not clot fibrinogen. Does not affect platelet function. Induces hypotensive effects on rats. Shows a preferential cleavage at Lys-|-Xaa over Arg-|-Xaa bonds. The chain is Venom plasminogen activator LV-PA from Lachesis muta muta (Bushmaster).